The primary structure comprises 329 residues: Gut-specific cysteine proteinase (329 aa).

Positions 1 to 15 are cleaved as a signal peptide; it reads MKFLILTALCAVTLA. The propeptide at 16–84 is activation peptide; sequence FVPINHQSAV…ATEQEVVLAS (69 aa). 6 disulfides stabilise this stretch: Cys-98–Cys-127, Cys-110–Cys-155, Cys-146–Cys-204, Cys-147–Cys-151, Cys-183–Cys-208, and Cys-191–Cys-196. Residue Cys-113 is part of the active site. Active-site residues include His-275 and Asn-295.

The protein belongs to the peptidase C1 family. Larvae exhibit strong expression in gut cells and weak expression in hypodermal cells. Adults exhibit the reverse: strong expression in hypodermal cells and weaker expression in gut cells.

Functionally, thiol protease. Has a role as a digestive enzyme. The sequence is that of Gut-specific cysteine proteinase (cpr-1) from Caenorhabditis elegans.